Here is an 84-residue protein sequence, read N- to C-terminus: UPF0297 protein Csac_1773 (84 aa).

The protein belongs to the UPF0297 family.

This is UPF0297 protein Csac_1773 from Caldicellulosiruptor saccharolyticus (strain ATCC 43494 / DSM 8903 / Tp8T 6331).